The sequence spans 1177 residues: Tyrosine-protein kinase hopscotch (1177 aa).

The interval 1–41 (MALANGGEDRMDDSSSGRTSLADSASLTNSSLRSGTSSQSI) is disordered. A compositionally biased stretch (polar residues) spans 16-41 (SGRTSLADSASLTNSSLRSGTSSQSI). Residues Ser40 and Ser321 each carry the phosphoserine modification. One can recognise an FERM domain in the interval 46 to 414 (GTIRVFNFTT…IYIRLSSKWM (369 aa)). The SH2; atypical domain maps to 433–539 (HCHGPIGGAY…YRIPASKYDK (107 aa)). Protein kinase domains lie at 582 to 843 (YPDS…AEIL) and 892 to 1164 (YNME…HPTD). Residues 898-906 (IGRGHYGTV) and Lys926 contribute to the ATP site. Asp1014 functions as the Proton acceptor in the catalytic mechanism. 2 positions are modified to phosphotyrosine; by autocatalysis: Tyr1047 and Tyr1048. Residues 1158 to 1177 (KVTHPTDGHQSPPNQPTDAE) form a disordered region.

The protein belongs to the protein kinase superfamily. Tyr protein kinase family. JAK subfamily. In terms of assembly, forms a complex with Hsp83 and piwi; probably Hop mediates the interaction between piwi and Hsp83.

The protein resides in the endomembrane system. It carries out the reaction L-tyrosyl-[protein] + ATP = O-phospho-L-tyrosyl-[protein] + ADP + H(+). Its function is as follows. Tyrosine kinase of the non-receptor type, phosphorylates the marelle protein. Required maternally for the establishment of the normal array of embryonic segments: involved in the control of pair-rule gene transcription in a stripe-specific manner. Together with Hsp83 and piwi, mediates canalization, also known as developmental robustness, likely via epigenetic silencing of existing genetic variants and suppression of transposon-induced new genetic variation. The chain is Tyrosine-protein kinase hopscotch (hop) from Drosophila melanogaster (Fruit fly).